We begin with the raw amino-acid sequence, 406 residues long: Protein ALP1-like (406 aa).

The Nuclear localization signal motif lies at 8-15 (KKKKRAEK). The DDE Tnp4 domain maps to 187–353 (IDITHIVMNL…IIFVCCLLHN (167 aa)). A divalent metal cation-binding residues include aspartate 188, aspartate 240, and aspartate 279.

This sequence belongs to the HARBI1 family. Requires a divalent metal cation as cofactor.

It localises to the nucleus. Transposase-derived protein that may have nuclease activity. The chain is Protein ALP1-like from Arabidopsis thaliana (Mouse-ear cress).